Reading from the N-terminus, the 347-residue chain is GTPase Obg (347 aa).

Residues 1–159 enclose the Obg domain; sequence MKFVDEATIK…RVLRLELKLL (159 aa). Residues 127 to 146 are disordered; sequence NTRYKTSTNRAPRQSKPGTP. Over residues 129 to 138 the composition is skewed to polar residues; sequence RYKTSTNRAP. One can recognise an OBG-type G domain in the interval 160–334; it reads ADVGLLGLPN…LMQAIMKYLE (175 aa). Residues 166-173, 191-195, 213-216, 284-287, and 315-317 each bind GTP; these read GLPNAGKS, FTTLY, DIPG, NKID, and SAA. Residues Ser-173 and Thr-193 each contribute to the Mg(2+) site.

It belongs to the TRAFAC class OBG-HflX-like GTPase superfamily. OBG GTPase family. In terms of assembly, monomer. Requires Mg(2+) as cofactor.

The protein localises to the cytoplasm. Functionally, an essential GTPase which binds GTP, GDP and possibly (p)ppGpp with moderate affinity, with high nucleotide exchange rates and a fairly low GTP hydrolysis rate. Plays a role in control of the cell cycle, stress response, ribosome biogenesis and in those bacteria that undergo differentiation, in morphogenesis control. The sequence is that of GTPase Obg from Thioalkalivibrio sulfidiphilus (strain HL-EbGR7).